Consider the following 669-residue polypeptide: Epithelial sodium channel subunit alpha (669 aa).

Positions 1–43 are disordered; sequence MEGNKLEEQDSSPPQSTPGLMKGNKREEQGLGPEPAAPQQPTA. The Cytoplasmic portion of the chain corresponds to 1 to 85; sequence MEGNKLEEQD…CSQHNRMKTA (85 aa). Positions 33 to 42 are enriched in low complexity; it reads PEPAAPQQPT. The chain crosses the membrane as a helical span at residues 86–106; it reads FWAVLWLCTFGMMYWQFGLLF. Over 107-562 the chain is Extracellular; it reads GEYFSYPVSL…SQWSLWFGSS (456 aa). 10 disulfides stabilise this stretch: Cys-133–Cys-305, Cys-229–Cys-236, Cys-282–Cys-289, Cys-394–Cys-479, Cys-416–Cys-456, Cys-416–Cys-475, Cys-420–Cys-471, Cys-429–Cys-456, Cys-429–Cys-479, and Cys-431–Cys-445. The tract at residues 175-243 is gating release of inhibition by proteolysis (GRIP); protease-sensitive region that is responsible for the proteolytic activation of the channel; it reads RSRRDLRGTL…SDCFYQTYSS (69 aa). A helical transmembrane segment spans residues 563–583; the sequence is VLSVVEMAELVFDLLVIMFLM. The Cytoplasmic segment spans residues 584-669; it reads LLRRFRSRYW…SSSTCPLGGP (86 aa). The disordered stretch occupies residues 620–669; the sequence is HPMSLSLSQPGPAPSPALTAPPPAYATLGPRPSPGGSAGASSSTCPLGGP. The span at 630–643 shows a compositional bias: pro residues; sequence GPAPSPALTAPPPA. The short motif at 640–644 is the PY motif; recruits WW domain-containing proteins and is thereby required for ubiquitination and inhibition of the channel by NEDD4 and NEDD4L element; sequence PPPAY.

The protein belongs to the amiloride-sensitive sodium channel (TC 1.A.6) family. SCNN1A subfamily. Heterotrimer; containing an alpha/SCNN1A, a beta/SCNN1B and a gamma/SCNN1G subunit. Interacts with WWP1 (via WW domains). Interacts with WWP2 (via WW domains); inhibits the channel. Interacts with BPIFA1; the interaction is indirect via SCNN1B and inhibits the proteolytic processing of SCNN1A and SCNN1G and the activation of ENaC. Interacts with the full-length immature form of PCSK9 (pro-PCSK9); inhibits ENaC by promoting its proteasomal degradation. In terms of processing, ubiquitinated. Can be ubiquitinated at multiple sites and undergo monoubiquitination and polyubiquitination. Ubiquitination by NEDD4 or NEDD4L inhibits the ENaC channel through endocytosis, intracellular retention and degradation of its individual subunits. ENaC is activated through the proteolytic maturation of its subunits. Furin cleaves the SCNN1A subunit, which results in a stepwise increase in the open probability of the channel due to the release of an inhibitory tract. BPIFA1, which is recruited by the SCNN1B subunit, prevents the proteolytic activation of ENaC. Post-translationally, N-glycosylated. As to expression, expressed in the female reproductive tract, from the fimbrial end of the fallopian tube to the endometrium (at protein level). Expressed in kidney (at protein level). In the respiratory tract, expressed in the bronchial epithelium (at protein level). Highly expressed in lung. Detected at intermediate levels in pancreas and liver, and at low levels in heart and placenta. in skin, expressed in keratinocytes, melanocytes and Merkel cells of the epidermal sub-layers, stratum basale, stratum spinosum and stratum granulosum (at protein level). Expressed in the outer root sheath of the hair follicles (at protein level). Detected in both peripheral and central cells of the sebaceous gland (at protein level). Expressed by eccrine sweat glands (at protein level). In skin, also expressed by arrector pili muscle cells and intradermal adipocytes. Isoform 1 and isoform 2 predominate in all tissues. In terms of tissue distribution, detected in lung and heart.

The protein localises to the apical cell membrane. It is found in the cell projection. The protein resides in the cilium. Its subcellular location is the cytoplasmic granule. It localises to the cytoplasm. The protein localises to the cytoplasmic vesicle. It is found in the secretory vesicle. The protein resides in the acrosome. Its subcellular location is the flagellum. It carries out the reaction Na(+)(in) = Na(+)(out). Its activity is regulated as follows. Originally identified and characterized by its inhibition by the diuretic drug amiloride. Inhibited by phenamil. Its function is as follows. This is one of the three pore-forming subunits of the heterotrimeric epithelial sodium channel (ENaC), a critical regulator of sodium balance and fluid homeostasis. ENaC operates in epithelial tissues, where it mediates the electrodiffusion of sodium ions from extracellular fluid through the apical membrane of cells, with water following osmotically. It plays a key role in maintaining sodium homeostasis through electrogenic sodium reabsorption in the kidneys. Additionally, ENaC is essential for airway surface liquid homeostasis, which is crucial for proper mucus clearance. In terms of biological role, not functional. This Homo sapiens (Human) protein is Epithelial sodium channel subunit alpha.